The sequence spans 86 residues: RNA-binding protein Hfq (86 aa).

One can recognise a Sm domain in the interval 9-68 (DPYLNTLRKEKVPVSIYLVNGIKLQGSIESFDQFVVLLKNTVSQMVYKHAISTVVPARPV). The tract at residues 66-86 (RPVRLPSPSDSEHGDSEPGNA) is disordered. The segment covering 75-86 (DSEHGDSEPGNA) has biased composition (basic and acidic residues).

This sequence belongs to the Hfq family. In terms of assembly, homohexamer.

In terms of biological role, RNA chaperone that binds small regulatory RNA (sRNAs) and mRNAs to facilitate mRNA translational regulation in response to envelope stress, environmental stress and changes in metabolite concentrations. Also binds with high specificity to tRNAs. In Pseudomonas putida (strain W619), this protein is RNA-binding protein Hfq.